The primary structure comprises 1397 residues: DNA-directed RNA polymerase subunit beta (1397 aa).

This sequence belongs to the RNA polymerase beta chain family. As to quaternary structure, the RNAP catalytic core consists of 2 alpha, 1 beta, 1 beta' and 1 omega subunit. When a sigma factor is associated with the core the holoenzyme is formed, which can initiate transcription.

It carries out the reaction RNA(n) + a ribonucleoside 5'-triphosphate = RNA(n+1) + diphosphate. DNA-dependent RNA polymerase catalyzes the transcription of DNA into RNA using the four ribonucleoside triphosphates as substrates. The polypeptide is DNA-directed RNA polymerase subunit beta (Rhodospirillum centenum (strain ATCC 51521 / SW)).